Consider the following 434-residue polypeptide: Trigger factor (434 aa).

The 86-residue stretch at 161–246 (EDRVTVDFTG…LKKVEQRELP (86 aa)) folds into the PPIase FKBP-type domain.

The protein belongs to the FKBP-type PPIase family. Tig subfamily.

It localises to the cytoplasm. It carries out the reaction [protein]-peptidylproline (omega=180) = [protein]-peptidylproline (omega=0). Its function is as follows. Involved in protein export. Acts as a chaperone by maintaining the newly synthesized protein in an open conformation. Functions as a peptidyl-prolyl cis-trans isomerase. This Sodalis glossinidius (strain morsitans) protein is Trigger factor.